The sequence spans 387 residues: Probable serine protease FE772_23060 (387 aa).

The protein belongs to the peptidase S1 family.

Its function is as follows. Possibly a dedicated protease for substrate gasdermin bGSDM; cleaves the bGSDM precursor, releasing the pore-forming moiety, which integrates into the membrane and triggers cell death. Involved in defense against bacteriophages. When this probable 4 gene operon (bGSDM-FE772_23060-FE772_23065-FE772_23070) is inserted into E.coli it provides nearly 100-fold protection against phages T5 and T6 and about 8-fold against phage T4. The operon without bGSDM no longer protects against phage. This is Probable serine protease FE772_23060 from Lysobacter enzymogenes.